The chain runs to 63 residues: UPF0337 protein Atu0782 (63 aa).

The segment at 1-63 is disordered; it reads MGSTSDKIAG…DAVKGAVDRM (63 aa). The segment covering 51–63 has biased composition (basic and acidic residues); that stretch reads KAKDAVKGAVDRM.

Belongs to the UPF0337 (CsbD) family.

In Agrobacterium fabrum (strain C58 / ATCC 33970) (Agrobacterium tumefaciens (strain C58)), this protein is UPF0337 protein Atu0782.